The chain runs to 298 residues: Urease accessory protein UreD 3 (298 aa).

Positions 1–30 are disordered; sequence MADEAGTRSAGGRPIPAAEPLRPALSRQRS.

Belongs to the UreD family. UreD, UreF and UreG form a complex that acts as a GTP-hydrolysis-dependent molecular chaperone, activating the urease apoprotein by helping to assemble the nickel containing metallocenter of UreC. The UreE protein probably delivers the nickel.

The protein localises to the cytoplasm. Its function is as follows. Required for maturation of urease via the functional incorporation of the urease nickel metallocenter. In Methylorubrum extorquens (strain PA1) (Methylobacterium extorquens), this protein is Urease accessory protein UreD 3.